A 541-amino-acid polypeptide reads, in one-letter code: Pheromone B beta 1 receptor (541 aa).

Residues Met-1–Pro-3 are Extracellular-facing. A helical membrane pass occupies residues Glu-4–Trp-24. Residues Arg-25–Ser-33 lie on the Cytoplasmic side of the membrane. The helical transmembrane segment at Ile-34–Gly-54 threads the bilayer. The Extracellular segment spans residues Ser-55–Lys-69. Residues Leu-70–Glu-90 form a helical membrane-spanning segment. Over Arg-91–Thr-109 the chain is Cytoplasmic. Residues Ile-110–Val-130 form a helical membrane-spanning segment. Residues Gln-131–Ser-150 lie on the Extracellular side of the membrane. A helical transmembrane segment spans residues Ile-151–Tyr-171. The Cytoplasmic portion of the chain corresponds to Ala-172 to Leu-205. A helical membrane pass occupies residues Ile-206–Phe-226. Topologically, residues Ser-227–Gly-264 are extracellular. The helical transmembrane segment at Ala-265–Phe-285 threads the bilayer. Residues Gly-286–Arg-541 lie on the Cytoplasmic side of the membrane. Disordered stretches follow at residues Thr-364–Ser-393 and Tyr-414–Arg-541. Over residues Met-372–Gln-385 the composition is skewed to pro residues. Positions Pro-420 to Thr-429 are enriched in low complexity. Pro residues-rich tracts occupy residues Ile-467–His-478 and Ser-493–Pro-502.

This sequence belongs to the G-protein coupled receptor 4 family.

It is found in the membrane. Its function is as follows. Receptor for the BBP1 pheromone, a prenylated mating factor. This is Pheromone B beta 1 receptor (BBR1) from Schizophyllum commune (Split gill fungus).